The chain runs to 427 residues: Endothelin-1 receptor (427 aa).

A signal peptide spans 1-20 (METFCFRVSFWVALLGCVIS). At 21–80 (DNPESHSTNLSTHVDDFTTFRGTEFSLVVTTHRPTNLALPSNGSMHNYCPQQTKITSAFK) the chain is on the extracellular side. N-linked (GlcNAc...) asparagine glycans are attached at residues asparagine 29 and asparagine 62. The helical transmembrane segment at 81-102 (YINTVISCTIFIVGMVGNATLL) threads the bilayer. Residues 103–112 (RIIYQNKCMR) lie on the Cytoplasmic side of the membrane. The chain crosses the membrane as a helical span at residues 113 to 132 (NGPNALIASLALGDLIYVVI). Residues 133-159 (DLPINVFKLLAGRWPFENHDFGVFLCK) are Extracellular-facing. Cysteine 158 and cysteine 239 are disulfide-bonded. The chain crosses the membrane as a helical span at residues 160-181 (LFPFLQKSSVGITVLNLCALSV). Over 182–205 (DRYRAVASWSRVQGIGIPLVTAIE) the chain is Cytoplasmic. The helical transmembrane segment at 206–229 (IVSIWILSFILAIPEAIGFVMVPF) threads the bilayer. Over 230 to 256 (EYKGEEHKTCMLNATSKFMEFYQDVKD) the chain is Extracellular. The helical transmembrane segment at 257–278 (WWLFGFYFCMPLVCTAIFYTLM) threads the bilayer. Topologically, residues 279–306 (TCEMLNRRNGSLRIALSEHLKQRREVAK) are cytoplasmic. Residues 307–328 (TVFCLVVIFALCWFPLHLSRIL) traverse the membrane as a helical segment. At 329 to 347 (KKTVYDEMDKNRCELLSFL) the chain is on the extracellular side. A helical membrane pass occupies residues 348 to 372 (LLMDYIGINLATMNSCINPIALYFV). Topologically, residues 373–427 (SKKFKNCFQSCLCCCCYQSKSLMTSVPMNGTSIQWKNHEQNNHNTERSSHKDSIN) are cytoplasmic. Phosphoserine is present on serine 425.

It belongs to the G-protein coupled receptor 1 family. Endothelin receptor subfamily. EDNRA sub-subfamily. As to quaternary structure, interacts with HDAC7 and KAT5.

The protein localises to the cell membrane. Its function is as follows. Receptor for endothelin-1. Mediates its action by association with G proteins that activate a phosphatidylinositol-calcium second messenger system. The rank order of binding affinities for ET-A is: ET1 &gt; ET2 &gt;&gt; ET3. The chain is Endothelin-1 receptor from Sus scrofa (Pig).